A 323-amino-acid polypeptide reads, in one-letter code: Low affinity immunoglobulin gamma Fc region receptor II-c (323 aa).

Residues 1 to 42 (MGILSFLPVLATESDWADCKSPQPWGHMLLWTAVLFLAPVAG) form the signal peptide. Over 43-223 (TPAAPPKAVL…VQAPSSSPMG (181 aa)) the chain is Extracellular. Ig-like C2-type domains lie at 48–127 (PKAV…VHLT) and 131–213 (EWLV…VTIT). Cystine bridges form between cysteine 71–cysteine 113 and cysteine 152–cysteine 196. N-linked (GlcNAc...) asparagine glycosylation is found at asparagine 106, asparagine 180, and asparagine 187. Residues 224 to 246 (IIVAVVTGIAVAAIVAAVVALIY) traverse the membrane as a helical segment. Topologically, residues 247–323 (CRKKRISANS…PPNDHVNSNN (77 aa)) are cytoplasmic. The tract at residues 277–323 (KRQPEETNNDYETADGGYMTLNPRAPTDDDKNIYLTLPPNDHVNSNN) is disordered. Phosphotyrosine; by SRC-type Tyr-kinases occurs at positions 294 and 310.

Phosphorylated by SRC-type Tyr-kinases such as LYN, BLK, FYN and SYK. As to expression, isoform IIC1 is detected in monocytes, macrophages, polymorphonuclear cells and natural killer cells.

It is found in the cytoplasm. The protein resides in the cell membrane. Receptor for the Fc region of complexed immunoglobulins gamma. Low affinity receptor. Involved in a variety of effector and regulatory functions such as phagocytosis of immune complexes and modulation of antibody production by B-cells. This chain is Low affinity immunoglobulin gamma Fc region receptor II-c (FCGR2C), found in Homo sapiens (Human).